The following is a 1578-amino-acid chain: Pentafunctional AROM polypeptide (1578 aa).

A 3-dehydroquinate synthase region spans residues 1-384 (MAEPTKIKIL…YEPKASVVPN (384 aa)). NAD(+) contacts are provided by residues 44-46 (DTN), 81-84 (EVSK), 114-116 (GGV), and Asp119. Residue Arg130 coordinates 7-phospho-2-dehydro-3-deoxy-D-arabino-heptonate. An NAD(+)-binding site is contributed by 139–140 (TT). 2 residues coordinate 7-phospho-2-dehydro-3-deoxy-D-arabino-heptonate: Asp146 and Lys152. Lys161 contributes to the NAD(+) binding site. Asn162 is a 7-phospho-2-dehydro-3-deoxy-D-arabino-heptonate binding site. Residues 179–182 (FLET) and Asn190 each bind NAD(+). A Zn(2+)-binding site is contributed by Glu194. 7-phospho-2-dehydro-3-deoxy-D-arabino-heptonate is bound by residues 194 to 197 (EVIK) and Lys250. Glu260 acts as the Proton acceptor; for 3-dehydroquinate synthase activity in catalysis. 7-phospho-2-dehydro-3-deoxy-D-arabino-heptonate contacts are provided by residues 264–268 (RNLLN) and His271. His271 is a Zn(2+) binding site. The Proton acceptor; for 3-dehydroquinate synthase activity role is filled by His275. 7-phospho-2-dehydro-3-deoxy-D-arabino-heptonate contacts are provided by His287 and Lys356. His287 provides a ligand contact to Zn(2+). The interval 397–842 (VHPGVEPASN…WDTLRQKFSA (446 aa)) is EPSP synthase. Cys824 (for EPSP synthase activity) is an active-site residue. Residues 864–1055 (TASVFIIGMR…KRKKHSFFVS (192 aa)) are shikimate kinase. ATP is bound at residue 871–878 (GMRGAGKT). A 3-dehydroquinase region spans residues 1056 to 1276 (LTLPDLRTAG…AAPGQLSATE (221 aa)). His1179 serves as the catalytic Proton acceptor; for 3-dehydroquinate dehydratase activity. Residue Lys1207 is the Schiff-base intermediate with substrate; for 3-dehydroquinate dehydratase activity of the active site. The segment at 1289-1578 (QKKFAVFGTP…EDARAAVLSS (290 aa)) is shikimate dehydrogenase.

The protein in the N-terminal section; belongs to the sugar phosphate cyclases superfamily. Dehydroquinate synthase family. It in the 2nd section; belongs to the EPSP synthase family. In the 3rd section; belongs to the shikimate kinase family. This sequence in the 4th section; belongs to the type-I 3-dehydroquinase family. The protein in the C-terminal section; belongs to the shikimate dehydrogenase family. Homodimer. Requires Zn(2+) as cofactor.

The protein resides in the cytoplasm. The catalysed reaction is 7-phospho-2-dehydro-3-deoxy-D-arabino-heptonate = 3-dehydroquinate + phosphate. It catalyses the reaction 3-dehydroquinate = 3-dehydroshikimate + H2O. It carries out the reaction shikimate + NADP(+) = 3-dehydroshikimate + NADPH + H(+). The enzyme catalyses shikimate + ATP = 3-phosphoshikimate + ADP + H(+). The catalysed reaction is 3-phosphoshikimate + phosphoenolpyruvate = 5-O-(1-carboxyvinyl)-3-phosphoshikimate + phosphate. The protein operates within metabolic intermediate biosynthesis; chorismate biosynthesis; chorismate from D-erythrose 4-phosphate and phosphoenolpyruvate: step 2/7. Its pathway is metabolic intermediate biosynthesis; chorismate biosynthesis; chorismate from D-erythrose 4-phosphate and phosphoenolpyruvate: step 3/7. It functions in the pathway metabolic intermediate biosynthesis; chorismate biosynthesis; chorismate from D-erythrose 4-phosphate and phosphoenolpyruvate: step 4/7. It participates in metabolic intermediate biosynthesis; chorismate biosynthesis; chorismate from D-erythrose 4-phosphate and phosphoenolpyruvate: step 5/7. The protein operates within metabolic intermediate biosynthesis; chorismate biosynthesis; chorismate from D-erythrose 4-phosphate and phosphoenolpyruvate: step 6/7. The AROM polypeptide catalyzes 5 consecutive enzymatic reactions in prechorismate polyaromatic amino acid biosynthesis. This is Pentafunctional AROM polypeptide from Aspergillus flavus (strain ATCC 200026 / FGSC A1120 / IAM 13836 / NRRL 3357 / JCM 12722 / SRRC 167).